Here is a 251-residue protein sequence, read N- to C-terminus: HTH-type transcriptional regulator UlaR (251 aa).

The HTH deoR-type domain maps to 3–58 (EAQRHQILLEMLAQLGFVTVEKVVERLGISPATARRDINKLDERGKLKKVRNGAEA). Positions 20–39 (VTVEKVVERLGISPATARRD) form a DNA-binding region, H-T-H motif.

It localises to the cytoplasm. In terms of biological role, represses ulaG and the ulaABCDEF operon. In Shigella sonnei (strain Ss046), this protein is HTH-type transcriptional regulator UlaR.